The sequence spans 140 residues: Gonadotropin subunit beta-2 (140 aa).

The signal sequence occupies residues 1-23 (MGTPVKILVVLFSVIVLLAVAQS). Intrachain disulfides connect Cys-29-Cys-77, Cys-43-Cys-92, Cys-46-Cys-130, Cys-54-Cys-108, Cys-58-Cys-110, and Cys-113-Cys-120. Residue Asn-33 is glycosylated (N-linked (GlcNAc...) asparagine).

Belongs to the glycoprotein hormones subunit beta family. As to quaternary structure, heterodimer of an alpha and a beta chain.

It localises to the secreted. Its function is as follows. Involved in gametogenesis and steroidogenesis. The polypeptide is Gonadotropin subunit beta-2 (cgbb) (Carassius auratus (Goldfish)).